We begin with the raw amino-acid sequence, 228 residues long: Putative adhesin RBE_1271 (228 aa).

The signal sequence occupies residues 1–22 (MKKLLLIAATSATVLSSALSFA).

The chain is Putative adhesin RBE_1271 from Rickettsia bellii (strain RML369-C).